A 1394-amino-acid chain; its full sequence is DNA-directed RNA polymerase subunit beta' (1394 aa).

Zn(2+) is bound by residues Cys70, Cys72, Cys85, and Cys88. Mg(2+) contacts are provided by Asp470, Asp472, and Asp474. Zn(2+) contacts are provided by Cys815, Cys889, Cys896, and Cys899.

The protein belongs to the RNA polymerase beta' chain family. The RNAP catalytic core consists of 2 alpha, 1 beta, 1 beta' and 1 omega subunit. When a sigma factor is associated with the core the holoenzyme is formed, which can initiate transcription. It depends on Mg(2+) as a cofactor. The cofactor is Zn(2+).

The catalysed reaction is RNA(n) + a ribonucleoside 5'-triphosphate = RNA(n+1) + diphosphate. Functionally, DNA-dependent RNA polymerase catalyzes the transcription of DNA into RNA using the four ribonucleoside triphosphates as substrates. This is DNA-directed RNA polymerase subunit beta' from Anaeromyxobacter dehalogenans (strain 2CP-C).